The sequence spans 223 residues: MACLGLRRYKAQLQLPSRTWPFVALLTLLFIPVFSEAIQVTQPSVVLASSHGVASFPCEYSPSHNTDEVRVTVLRQTNDQMTEVCATTFTEKNTVGFLDYPFCSGTFNESRVNLTIQGLRAVDTGLYLCKVELMYPPPYFVGMGNGTQIYVIDPEPCPDSDFLLWILVAVSLGLFFYSFLVSAVSLSKMLKKRSPLTTGVYVKMPPTEPECEKQFQPYFIPIN.

An N-terminal signal peptide occupies residues 1–35 (MACLGLRRYKAQLQLPSRTWPFVALLTLLFIPVFS). An Ig-like V-type domain is found at 36 to 145 (EAIQVTQPSV…PPPYFVGMGN (110 aa)). Residues 36–161 (EAIQVTQPSV…IDPEPCPDSD (126 aa)) lie on the Extracellular side of the membrane. The homodimerization stretch occupies residues 46 to 50 (VLASS). 2 disulfides stabilise this stretch: C58/C129 and C85/C103. 2 N-linked (GlcNAc...) asparagine glycosylation sites follow: N108 and N113. The interval 134-139 (MYPPPY) is important for interaction with CD80 and CD86. The N-linked (GlcNAc...) asparagine glycan is linked to N145. Residues 150 to 155 (YVIDPE) form a homodimerization region. A helical membrane pass occupies residues 162–182 (FLLWILVAVSLGLFFYSFLVS). Residues 183–223 (AVSLSKMLKKRSPLTTGVYVKMPPTEPECEKQFQPYFIPIN) are Cytoplasmic-facing. At Y201 the chain carries Phosphotyrosine; by TXK and JAK2.

Homodimer; disulfide-linked. Binds to CD80/B7-1 and CD86/B7.2. Interacts with ICOSLG. In terms of processing, N-glycosylation is important for dimerization. Post-translationally, phosphorylation at Tyr-201 prevents binding to the AP-2 adapter complex, blocks endocytosis, and leads to retention of CTLA4 on the cell surface. As to expression, widely expressed with highest levels in lymphoid tissues.

It is found in the cell membrane. In terms of biological role, inhibitory receptor acting as a major negative regulator of T-cell responses. The affinity of CTLA4 for its natural B7 family ligands, CD80 and CD86, is considerably stronger than the affinity of their cognate stimulatory coreceptor CD28. The protein is Cytotoxic T-lymphocyte protein 4 (Ctla4) of Mus musculus (Mouse).